Reading from the N-terminus, the 364-residue chain is Chaperone protein DnaJ (364 aa).

The J domain maps to 4 to 69 (DYYEILGLSK…NKKAKYDRFG (66 aa)). The segment at 135–213 (GYKNNINITR…CKGKGRITNQ (79 aa)) adopts a CR-type zinc-finger fold. Zn(2+)-binding residues include cysteine 148, cysteine 151, cysteine 165, cysteine 168, cysteine 187, cysteine 190, cysteine 201, and cysteine 204. CXXCXGXG motif repeat units follow at residues 148 to 155 (CHSCLGKK), 165 to 172 (CNMCNGSG), 187 to 194 (CSKCYGEG), and 201 to 208 (CKSCKGKG).

It belongs to the DnaJ family. Homodimer. Requires Zn(2+) as cofactor.

The protein localises to the cytoplasm. Its function is as follows. Participates actively in the response to hyperosmotic and heat shock by preventing the aggregation of stress-denatured proteins and by disaggregating proteins, also in an autonomous, DnaK-independent fashion. Unfolded proteins bind initially to DnaJ; upon interaction with the DnaJ-bound protein, DnaK hydrolyzes its bound ATP, resulting in the formation of a stable complex. GrpE releases ADP from DnaK; ATP binding to DnaK triggers the release of the substrate protein, thus completing the reaction cycle. Several rounds of ATP-dependent interactions between DnaJ, DnaK and GrpE are required for fully efficient folding. Also involved, together with DnaK and GrpE, in the DNA replication of plasmids through activation of initiation proteins. This is Chaperone protein DnaJ from Borrelia garinii subsp. bavariensis (strain ATCC BAA-2496 / DSM 23469 / PBi) (Borreliella bavariensis).